We begin with the raw amino-acid sequence, 450 residues long: UDP-N-acetylmuramoylalanine--D-glutamate ligase (450 aa).

ATP is bound at residue 115-121 (GTNGKST).

It belongs to the MurCDEF family.

It is found in the cytoplasm. It carries out the reaction UDP-N-acetyl-alpha-D-muramoyl-L-alanine + D-glutamate + ATP = UDP-N-acetyl-alpha-D-muramoyl-L-alanyl-D-glutamate + ADP + phosphate + H(+). The protein operates within cell wall biogenesis; peptidoglycan biosynthesis. Functionally, cell wall formation. Catalyzes the addition of glutamate to the nucleotide precursor UDP-N-acetylmuramoyl-L-alanine (UMA). This Syntrophotalea carbinolica (strain DSM 2380 / NBRC 103641 / GraBd1) (Pelobacter carbinolicus) protein is UDP-N-acetylmuramoylalanine--D-glutamate ligase.